We begin with the raw amino-acid sequence, 373 residues long: Aromatic amino acid aminotransferase (373 aa).

K212 is modified (N6-(pyridoxal phosphate)lysine).

Belongs to the class-II pyridoxal-phosphate-dependent aminotransferase family. As to quaternary structure, homodimer. It depends on pyridoxal 5'-phosphate as a cofactor.

The enzyme catalyses an aromatic L-alpha-amino acid + 2-oxoglutarate = an aromatic oxo-acid + L-glutamate. Functionally, aminotransferase that catalyzes the conversion of aromatic amino acids and 2-oxoglutarate into corresponding aromatic oxo acids and L-glutamate. This chain is Aromatic amino acid aminotransferase, found in Corynebacterium jeikeium (strain K411).